The chain runs to 2340 residues: Protein pad-1 (2340 aa).

Disordered stretches follow at residues 411–458 (KLIK…EPSI) and 1910–1959 (TRNS…RRDP). The span at 415–432 (KRPDSKPPRKPGDREGLH) shows a compositional bias: basic and acidic residues. Polar residues predominate over residues 437–448 (SLHSGVSGNSED). Positions 1922 to 1934 (GGSITSGSTSTTT) are enriched in low complexity.

This sequence belongs to the DOP1 family.

Functionally, essential for cell patterning during gastrulation. May be involved in protein traffic between late Golgi and early endosomes. The polypeptide is Protein pad-1 (pad-1) (Caenorhabditis briggsae).